Here is a 137-residue protein sequence, read N- to C-terminus: Large ribosomal subunit protein uL16 (137 aa).

It belongs to the universal ribosomal protein uL16 family. In terms of assembly, part of the 50S ribosomal subunit.

In terms of biological role, binds 23S rRNA and is also seen to make contacts with the A and possibly P site tRNAs. The chain is Large ribosomal subunit protein uL16 from Bradyrhizobium sp. (strain ORS 278).